The sequence spans 667 residues: Chaperone protein DnaK (667 aa).

A Phosphothreonine; by autocatalysis modification is found at T196. Disordered regions lie at residues 495-525 (EANS…RKER) and 595-667 (AGEE…GDDE). Over residues 506–525 (EKMKEEAEQHAEEDERRKER) the composition is skewed to basic and acidic residues. The span at 595–612 (AGEEIREAQQQQAQQGAA) shows a compositional bias: low complexity. The span at 630-641 (GPAGGPTGGPAS) shows a compositional bias: gly residues. Residues 647-667 (DSDEEDVQDADYEVVDEGDDE) show a composition bias toward acidic residues.

Belongs to the heat shock protein 70 family.

Its function is as follows. Acts as a chaperone. The sequence is that of Chaperone protein DnaK from Salinibacter ruber (strain DSM 13855 / M31).